A 375-amino-acid chain; its full sequence is Growth/differentiation factor 8 (375 aa).

The signal sequence occupies residues 1–23; the sequence is MQKLQLCVYIYLFMLIVAGPVDL. Positions 24-266 are excised as a propeptide; that stretch reads NENSEQKENV…VTDTPKRSRR (243 aa). The N-linked (GlcNAc...) asparagine glycan is linked to Asn-71. 4 disulfide bridges follow: Cys-272-Cys-282, Cys-281-Cys-340, Cys-309-Cys-372, and Cys-313-Cys-374.

The protein belongs to the TGF-beta family. As to quaternary structure, homodimer; disulfide-linked. Interacts with WFIKKN2, leading to inhibit its activity. Interacts with FST3. In terms of processing, synthesized as large precursor molecule that undergoes proteolytic cleavage to generate an N-terminal propeptide and a disulfide linked C-terminal dimer, which is the biologically active molecule. The circulating form consists of a latent complex of the C-terminal dimer and other proteins, including its propeptide, which maintain the C-terminal dimer in a latent, inactive state. Ligand activation requires additional cleavage of the prodomain by a tolloid-like metalloproteinase.

The protein resides in the secreted. Acts specifically as a negative regulator of skeletal muscle growth. The sequence is that of Growth/differentiation factor 8 (MSTN) from Homo sapiens (Human).